A 185-amino-acid chain; its full sequence is Large ribosomal subunit protein bL25 (185 aa).

This sequence belongs to the bacterial ribosomal protein bL25 family. CTC subfamily. In terms of assembly, part of the 50S ribosomal subunit; part of the 5S rRNA/L5/L18/L25 subcomplex. Contacts the 5S rRNA. Binds to the 5S rRNA independently of L5 and L18.

In terms of biological role, this is one of the proteins that binds to the 5S RNA in the ribosome where it forms part of the central protuberance. This is Large ribosomal subunit protein bL25 from Microcystis aeruginosa (strain NIES-843 / IAM M-2473).